A 457-amino-acid polypeptide reads, in one-letter code: MALWGGRFSQAADQRFKQFNDSLRFDYRLAEQDIIGSVAWSKALVTVGVLNADEQQQLEQALSVLLEEVQANPHAILASDAEDIHSWVETKLIDKVGDLGKKLHTGRSRNDQVATDLKLWCKFQITELQTAVQQLQQALVMTAEANQDAVMPGYTHLQRAQPVTFAHWCLAYVEMLSRDESRLQDTLKRLDVSPLGCGALAGTAYAIDREQLAGWLGFASATRNSLDSVSDRDHVLELLSDASIGMVHLSRFAEDLIFFNSGEAAFVDLSDRVTSGSSLMPQKKNPDALELIRGKCGRVQGALTGMMMTLKGLPLAYNKDMQEDKEGLFDALDTWLDCLHMAALVLDGIQVKRPRCKEAAEQGYANATELADYLVAKGVPFREAHHIVGEAVVEAIRQGKALEALALSDLQQFSSVIGDDVYPILALQSCLDKRVAKGGVSPQQVASAIAEAKARLF.

Belongs to the lyase 1 family. Argininosuccinate lyase subfamily.

The protein resides in the cytoplasm. It carries out the reaction 2-(N(omega)-L-arginino)succinate = fumarate + L-arginine. Its pathway is amino-acid biosynthesis; L-arginine biosynthesis; L-arginine from L-ornithine and carbamoyl phosphate: step 3/3. This chain is Argininosuccinate lyase, found in Yersinia pseudotuberculosis serotype O:3 (strain YPIII).